The sequence spans 230 residues: Phosphoenolpyruvate guanylyltransferase (230 aa).

T139, G155, and S158 together coordinate phosphoenolpyruvate.

Belongs to the CofC family.

The enzyme catalyses phosphoenolpyruvate + GTP + H(+) = enolpyruvoyl-2-diphospho-5'-guanosine + diphosphate. The protein operates within cofactor biosynthesis; coenzyme F420 biosynthesis. Functionally, guanylyltransferase that catalyzes the activation of phosphoenolpyruvate (PEP) as enolpyruvoyl-2-diphospho-5'-guanosine, via the condensation of PEP with GTP. It is involved in the biosynthesis of coenzyme F420, a hydride carrier cofactor. This chain is Phosphoenolpyruvate guanylyltransferase, found in Thermobaculum terrenum (strain ATCC BAA-798 / CCMEE 7001 / YNP1).